A 257-amino-acid chain; its full sequence is Snake venom serine protease KN2 (257 aa).

The signal sequence occupies residues 1 to 18; it reads MVLIRVLANLLILQLSYA. Residues 19-24 constitute a propeptide that is removed on maturation; the sequence is QKSSEL. The Peptidase S1 domain occupies 25-248; sequence VIGGHPCNIN…HLDWIKSIIA (224 aa). 6 disulfides stabilise this stretch: Cys-31–Cys-162, Cys-49–Cys-65, Cys-97–Cys-255, Cys-141–Cys-209, Cys-173–Cys-188, and Cys-199–Cys-224. Catalysis depends on charge relay system residues His-64 and Asp-109. Residues Asn-120 and Asn-121 are each glycosylated (N-linked (GlcNAc...) asparagine). Ser-203 functions as the Charge relay system in the catalytic mechanism.

The protein belongs to the peptidase S1 family. Snake venom subfamily. In terms of assembly, monomer. As to expression, expressed by the venom gland.

Its subcellular location is the secreted. Functionally, snake venom serine protease that may act in the hemostasis system of the prey. This is Snake venom serine protease KN2 from Trimeresurus stejnegeri (Chinese green tree viper).